Here is a 259-residue protein sequence, read N- to C-terminus: MLMVISPAKTLDFESTPVTPRFTQPQYLDHSQELIEQLRELSPAQISELMHVSDKIGGLNAARFGSWTPAFTQANAKQALLAFKGDVYTGLNADTFSDADFTYAQDHLRMLSGLYGLLRPLDLMMPYRLEMGTKLPNARGKDLYAFWGTRISEWLNEALAAQGDDVLLNLASNEYFSAVKRTALNARIINTEFKDLKNGQYKIISFYAKKARGMMSRFVIEERINDPAKLKQFDVQGYRFNAEQSKPDNLVFLRDHAPE.

This sequence belongs to the UPF0246 family.

The chain is UPF0246 protein PFLU_0992 from Pseudomonas fluorescens (strain SBW25).